A 279-amino-acid polypeptide reads, in one-letter code: 3-methyl-2-oxobutanoate hydroxymethyltransferase 2 (279 aa).

Aspartate 58 and aspartate 97 together coordinate Mg(2+). Residues 58–59 (DS), aspartate 97, and lysine 126 contribute to the 3-methyl-2-oxobutanoate site. Glutamate 128 lines the Mg(2+) pocket. Glutamate 195 acts as the Proton acceptor in catalysis.

Belongs to the PanB family. As to quaternary structure, homodecamer; pentamer of dimers. The cofactor is Mg(2+).

The protein localises to the cytoplasm. It carries out the reaction 3-methyl-2-oxobutanoate + (6R)-5,10-methylene-5,6,7,8-tetrahydrofolate + H2O = 2-dehydropantoate + (6S)-5,6,7,8-tetrahydrofolate. It participates in cofactor biosynthesis; (R)-pantothenate biosynthesis; (R)-pantoate from 3-methyl-2-oxobutanoate: step 1/2. In terms of biological role, catalyzes the reversible reaction in which hydroxymethyl group from 5,10-methylenetetrahydrofolate is transferred onto alpha-ketoisovalerate to form ketopantoate. The protein is 3-methyl-2-oxobutanoate hydroxymethyltransferase 2 of Methylibium petroleiphilum (strain ATCC BAA-1232 / LMG 22953 / PM1).